A 283-amino-acid chain; its full sequence is NFU1 iron-sulfur cluster scaffold homolog, mitochondrial (283 aa).

Residues 1–65 (MSKFLSQAAI…ELRMPVACRR (65 aa)) constitute a mitochondrion transit peptide. A nifU region spans residues 182–250 (IKELLDTRIR…IPEVESVEQV (69 aa)). Residues Cys-219 and Cys-222 each contribute to the [4Fe-4S] cluster site.

This sequence belongs to the NifU family.

It localises to the mitochondrion. In terms of biological role, molecular scaffold for [Fe-S] cluster assembly of mitochondrial iron-sulfur proteins. This is NFU1 iron-sulfur cluster scaffold homolog, mitochondrial from Drosophila simulans (Fruit fly).